Here is a 106-residue protein sequence, read N- to C-terminus: Cell cycle protein GpsB (106 aa).

Residues 34-67 (LDVIIQDYDNFKQEIDRLKAENEKLKKSTPAVEQ) adopt a coiled-coil conformation. Positions 55-83 (NEKLKKSTPAVEQSRSRSQQPPTSQVNYD) are disordered. A compositionally biased stretch (low complexity) spans 70-79 (SRSQQPPTSQ).

The protein belongs to the GpsB family. Forms polymers through the coiled coil domains. Interacts with PBP1, MreC and EzrA.

It is found in the cytoplasm. In terms of biological role, divisome component that associates with the complex late in its assembly, after the Z-ring is formed, and is dependent on DivIC and PBP2B for its recruitment to the divisome. Together with EzrA, is a key component of the system that regulates PBP1 localization during cell cycle progression. Its main role could be the removal of PBP1 from the cell pole after pole maturation is completed. Also contributes to the recruitment of PBP1 to the division complex. Not essential for septum formation. This is Cell cycle protein GpsB from Oceanobacillus iheyensis (strain DSM 14371 / CIP 107618 / JCM 11309 / KCTC 3954 / HTE831).